Here is a 330-residue protein sequence, read N- to C-terminus: Mitochondrial glycine transporter (330 aa).

Solcar repeat units lie at residues 11 to 94 (SSSY…LRQN), 122 to 206 (LSNL…LKKR), and 234 to 318 (TSAS…LIRR). 6 consecutive transmembrane segments (helical) span residues 17-42 (FTAG…TRLQ), 69-95 (GTVP…RQNV), 128-153 (LTTG…VRYE), 181-204 (GFGA…EQLK), 238-264 (INFG…KTRI), and 293-311 (GLGL…AWTI).

It belongs to the mitochondrial carrier (TC 2.A.29) family. SLC25A38 subfamily.

It localises to the mitochondrion inner membrane. It catalyses the reaction glycine(in) = glycine(out). Functionally, mitochondrial glycine transporter that imports glycine into the mitochondrial matrix. Plays an important role in providing glycine for the first enzymatic step in heme biosynthesis, the condensation of glycine with succinyl-CoA to produce 5-aminolevulinate (ALA) in the mitochondrial matrix. The chain is Mitochondrial glycine transporter from Sclerotinia sclerotiorum (strain ATCC 18683 / 1980 / Ss-1) (White mold).